Reading from the N-terminus, the 452-residue chain is MLSQLRQYHPVIELETVAHLLKSEYGDEQERAQLGQLGLQIVNRYDGYECPYKALFEAAVSDSKATISHAAGLHYSSANDESHTNDTDNEHRDDNVMKHLLSGKYLEALALLDANSKMDKSPFKHMEQFAKIMIFSRNYENVQELELRLQYSLSDDRIDQISKDQQPSQNLSDEKESICRIKLYICTSYFIEGRYFECSSKFYKFYIEDPKTMMKILTSKVDGDALLLLPELKTMIAASTLVSIPMNSYDELISIDELTELFDTVDILSRSLKLLINTSFKCFLALWNNEFQKTLSRCYLLNKSWETAERLMKMKIYCFYLKLSKTLTISYLSEKLGIEYDEVKESVERLICSANLYFHLDGDVISYSKRSIVDSTVRTLDENCRHINELLDKQRVRNDKLKEMISGNLLEEEQTIRKSDTAKTSNNQEIMDIDDVQFLSDDLEQVDSCISD.

The PCI domain maps to 205–374 (FYIEDPKTMM…ISYSKRSIVD (170 aa)).

In terms of assembly, component of a COP9 signalosome-like (CSN) complex.

The protein resides in the cytoplasm. Its subcellular location is the nucleus. In terms of biological role, component of the COP9 signalosome (CSN) complex that acts as an regulator of the ubiquitin (Ubl) conjugation pathway by mediating the deneddylation of the cullin subunit of SCF-type E3 ubiquitin-protein ligase complexes The CSN complex is involved in the regulation of the mating pheromone response. PCI8 may also be involved in transcriptional and translational control. This chain is COP9 signalosome complex subunit 11 (PCI8), found in Candida glabrata (strain ATCC 2001 / BCRC 20586 / JCM 3761 / NBRC 0622 / NRRL Y-65 / CBS 138) (Yeast).